The sequence spans 182 residues: Coiled-coil domain-containing protein 32 (182 aa).

Over residues Met-1–Ala-10 the composition is skewed to basic and acidic residues. 2 disordered regions span residues Met-1 to Trp-61 and Pro-153 to Lys-182. A compositionally biased stretch (polar residues) spans Pro-153–Asp-167. Acidic residues predominate over residues Glu-172–Lys-182.

In terms of assembly, associates with adaptor protein complex 2 (AP-2).

It is found in the membrane. It localises to the coated pit. Functionally, regulates clathrin-mediated endocytsois of cargos such as transferrin probably through the association and modulation of adaptor protein complex 2 (AP-2). Has a role in ciliogenesis and is required for proper cephalic and left/right axis development. The protein is Coiled-coil domain-containing protein 32 of Danio rerio (Zebrafish).